The sequence spans 261 residues: Hydroxyethylthiazole kinase (261 aa).

M45 serves as a coordination point for substrate. ATP-binding residues include R121 and S167. G194 is a binding site for substrate.

It belongs to the Thz kinase family. Mg(2+) serves as cofactor.

The enzyme catalyses 5-(2-hydroxyethyl)-4-methylthiazole + ATP = 4-methyl-5-(2-phosphooxyethyl)-thiazole + ADP + H(+). Its pathway is cofactor biosynthesis; thiamine diphosphate biosynthesis; 4-methyl-5-(2-phosphoethyl)-thiazole from 5-(2-hydroxyethyl)-4-methylthiazole: step 1/1. In terms of biological role, catalyzes the phosphorylation of the hydroxyl group of 4-methyl-5-beta-hydroxyethylthiazole (THZ). The polypeptide is Hydroxyethylthiazole kinase (Vibrio atlanticus (strain LGP32) (Vibrio splendidus (strain Mel32))).